A 227-amino-acid polypeptide reads, in one-letter code: Cytochrome c oxidase subunit 2 (227 aa).

The Mitochondrial intermembrane segment spans residues 1-14 (MAYPFQLGLQDATS). A helical membrane pass occupies residues 15-45 (PIMEELTNFHDHTLMIVFLISSLVLYIISLM). Over 46-59 (LTTKLTHTSTMDAQ) the chain is Mitochondrial matrix. A helical transmembrane segment spans residues 60 to 87 (EVETIWTILPAVILILIALPSLRILYMM). Over 88–227 (DEINNPALTV…HFENWSASMI (140 aa)) the chain is Mitochondrial intermembrane. Residues His-161, Cys-196, Glu-198, Cys-200, His-204, and Met-207 each contribute to the Cu cation site. Glu-198 contacts Mg(2+).

This sequence belongs to the cytochrome c oxidase subunit 2 family. Component of the cytochrome c oxidase (complex IV, CIV), a multisubunit enzyme composed of 14 subunits. The complex is composed of a catalytic core of 3 subunits MT-CO1, MT-CO2 and MT-CO3, encoded in the mitochondrial DNA, and 11 supernumerary subunits COX4I, COX5A, COX5B, COX6A, COX6B, COX6C, COX7A, COX7B, COX7C, COX8 and NDUFA4, which are encoded in the nuclear genome. The complex exists as a monomer or a dimer and forms supercomplexes (SCs) in the inner mitochondrial membrane with NADH-ubiquinone oxidoreductase (complex I, CI) and ubiquinol-cytochrome c oxidoreductase (cytochrome b-c1 complex, complex III, CIII), resulting in different assemblies (supercomplex SCI(1)III(2)IV(1) and megacomplex MCI(2)III(2)IV(2)). Found in a complex with TMEM177, COA6, COX18, COX20, SCO1 and SCO2. Interacts with TMEM177 in a COX20-dependent manner. Interacts with COX20. Interacts with COX16. It depends on Cu cation as a cofactor.

Its subcellular location is the mitochondrion inner membrane. It carries out the reaction 4 Fe(II)-[cytochrome c] + O2 + 8 H(+)(in) = 4 Fe(III)-[cytochrome c] + 2 H2O + 4 H(+)(out). Component of the cytochrome c oxidase, the last enzyme in the mitochondrial electron transport chain which drives oxidative phosphorylation. The respiratory chain contains 3 multisubunit complexes succinate dehydrogenase (complex II, CII), ubiquinol-cytochrome c oxidoreductase (cytochrome b-c1 complex, complex III, CIII) and cytochrome c oxidase (complex IV, CIV), that cooperate to transfer electrons derived from NADH and succinate to molecular oxygen, creating an electrochemical gradient over the inner membrane that drives transmembrane transport and the ATP synthase. Cytochrome c oxidase is the component of the respiratory chain that catalyzes the reduction of oxygen to water. Electrons originating from reduced cytochrome c in the intermembrane space (IMS) are transferred via the dinuclear copper A center (CU(A)) of subunit 2 and heme A of subunit 1 to the active site in subunit 1, a binuclear center (BNC) formed by heme A3 and copper B (CU(B)). The BNC reduces molecular oxygen to 2 water molecules using 4 electrons from cytochrome c in the IMS and 4 protons from the mitochondrial matrix. This is Cytochrome c oxidase subunit 2 (MT-CO2) from Berylmys bowersi (Bower's white-toothed rat).